A 251-amino-acid polypeptide reads, in one-letter code: Flap endonuclease Xni (251 aa).

Mg(2+) is bound at residue Asp-104. Residues 160–249 (VLPRQLPDYW…IDGNLQQLRL (90 aa)) form the 5'-3' exonuclease domain. 5 residues coordinate K(+): Leu-171, Ala-172, Pro-180, Val-182, and Ile-185. Residues 184 to 189 (GIGPKS) are interaction with DNA.

Belongs to the Xni family. Requires Mg(2+) as cofactor. K(+) is required as a cofactor.

Has flap endonuclease activity. During DNA replication, flap endonucleases cleave the 5'-overhanging flap structure that is generated by displacement synthesis when DNA polymerase encounters the 5'-end of a downstream Okazaki fragment. The polypeptide is Flap endonuclease Xni (Salmonella heidelberg (strain SL476)).